The sequence spans 471 residues: Putative multidrug resistance protein MdtD (471 aa).

The next 13 helical transmembrane spans lie at 12–32, 49–69, 72–92, 101–123, 138–158, 165–185, 195–215, 220–240, 265–285, 286–306, 342–362, 393–413, and 431–451; these read LWIV…VNTA, MVIV…GWMA, IGVR…SLFC, LVMS…RLTV, FVTL…GILV, WIFL…LWLM, FDIF…LALD, LGIS…SILW, IGLF…FMTP, VFLQ…MIPM, LVFM…VLFF, LLSM…GLLL, and VFLY…LIFA.

The protein belongs to the major facilitator superfamily. TCR/Tet family.

The protein localises to the cell inner membrane. The sequence is that of Putative multidrug resistance protein MdtD from Enterobacter sp. (strain 638).